We begin with the raw amino-acid sequence, 283 residues long: 2-dehydro-3-deoxyphosphooctonate aldolase (283 aa).

The protein belongs to the KdsA family.

Its subcellular location is the cytoplasm. The catalysed reaction is D-arabinose 5-phosphate + phosphoenolpyruvate + H2O = 3-deoxy-alpha-D-manno-2-octulosonate-8-phosphate + phosphate. Its pathway is carbohydrate biosynthesis; 3-deoxy-D-manno-octulosonate biosynthesis; 3-deoxy-D-manno-octulosonate from D-ribulose 5-phosphate: step 2/3. It functions in the pathway bacterial outer membrane biogenesis; lipopolysaccharide biosynthesis. The protein is 2-dehydro-3-deoxyphosphooctonate aldolase of Prochlorococcus marinus (strain MIT 9313).